A 336-amino-acid chain; its full sequence is Alpha-N-acetylgalactosaminide alpha-2,6-sialyltransferase 5 (336 aa).

Residues 1–8 are Cytoplasmic-facing; it reads MKTLMRHG. A helical; Signal-anchor for type II membrane protein membrane pass occupies residues 9–29; sequence LAVCLVLTTMCTSLLLVYSSL. Topologically, residues 30 to 336 are lumenal; it reads GSQKERPPQQ…VNHAEGKPVF (307 aa). Residues 34–76 form a disordered region; the sequence is ERPPQQQQQQQQQQQQAATATGSTQLVESSPQPRRTAPAGPRQ. Over residues 38–49 the composition is skewed to low complexity; that stretch reads QQQQQQQQQQQQ. The segment covering 50-66 has biased composition (polar residues); sequence AATATGSTQLVESSPQP. A disulfide bond links cysteine 96 and cysteine 245. N-linked (GlcNAc...) asparagine glycosylation is found at asparagine 137 and asparagine 161.

It belongs to the glycosyltransferase 29 family. As to expression, high expression in forebrain and to a lesser extent in cerebellum. No expression in salivary gland, intestine, liver, kidney, heart, lung, thymus and spleen.

The protein localises to the golgi apparatus membrane. The enzyme catalyses a ganglioside GM1b (d18:1(4E)) + CMP-N-acetyl-beta-neuraminate = a ganglioside GD1alpha (d18:1(4E)) + CMP + H(+). The catalysed reaction is N-acetyl-alpha-neuraminosyl-(2-&gt;3)-beta-D-galactosyl-(1-&gt;3)-N-acetyl-beta-D-glucosaminyl-(1-&gt;3)-beta-D-galactosyl-(1-&gt;4)-beta-D-glucosyl-(1&lt;-&gt;1')-N-acyl-sphing-4-enine + CMP-N-acetyl-beta-neuraminate = N-acetyl-alpha-neuraminosyl-(2-&gt;3)-beta-D-galactosyl-(1-&gt;3)-[N-acetyl-alpha-neuraminosyl-(2-&gt;6)]-N-acetyl-beta-D-glucosaminyl-(1-&gt;3)-beta-D-galactosyl-(1-&gt;4)-beta-D-glucosyl-(1&lt;-&gt;1')-N-acyl-sphing-4-enine + CMP + H(+). It functions in the pathway glycolipid biosynthesis. Its function is as follows. Predominantly catalyzes the biosynthesis of ganglioside GD1alpha from GM1b in the brain, by transferring the sialyl group (N-acetyl-alpha-neuraminyl or NeuAc) from CMP-NeuAc to the GalNAc residue on the NeuAc-alpha-2,3-Gal-beta-1,3-GalNAc sequence of GM1b. GD1alpha is a critical molecule in the communication and interaction between neuronal cells and their supportive cells, particularly in brain tissues, and functions as an adhesion molecule in the process of metastasis. Also shows activity towards sialyl Lc4Cer (N-acetyl-alpha-neuraminosyl-(2-&gt;3)-beta-D-galactosyl-(1-&gt;3)-N-acetyl-beta-D-glucosaminyl-(1-&gt;3)-beta-D-galactosyl-(1-&gt;4)-beta-D-glucosyl-(1&lt;-&gt;1')-N-acyl-sphing-4-enine) generating disialyl Lc4Cer, which can lead to the synthesis of disialyl Lewis a (Le(a)), suggested to be a cancer-associated antigen. This Mus musculus (Mouse) protein is Alpha-N-acetylgalactosaminide alpha-2,6-sialyltransferase 5 (St6galnac5).